The primary structure comprises 468 residues: Probable Xaa-Pro aminopeptidase PEPP (468 aa).

Asp264, Asp275, Glu398, and Glu438 together coordinate Mn(2+).

Belongs to the peptidase M24B family. Requires Mn(2+) as cofactor.

The enzyme catalyses Release of any N-terminal amino acid, including proline, that is linked to proline, even from a dipeptide or tripeptide.. Catalyzes the removal of a penultimate prolyl residue from the N-termini of peptides. In Paracoccidioides brasiliensis (strain Pb18), this protein is Probable Xaa-Pro aminopeptidase PEPP (PEPP).